Consider the following 423-residue polypeptide: Carboxypeptidase B2 (423 aa).

The signal sequence occupies residues 1-22 (MKLYSLGVLVATVLFCGEHAFA). A propeptide spans 23-114 (FQRGQVLSAL…QTSNDTISPR (92 aa)) (activation peptide). N-linked (GlcNAc...) asparagine glycans are attached at residues Asn44, Asn73, Asn85, and Asn108. Positions 122 to 419 (QYHSLNEIYS…VAVAKIASHV (298 aa)) constitute a Peptidase M14 domain. Residues Cys178 and Cys191 are joined by a disulfide bond. Zn(2+) is bound by residues His181 and Glu184. Substrate is bound by residues 181 to 184 (HARE) and Arg239. N-linked (GlcNAc...) asparagine glycosylation is present at Asn241. 2 disulfide bridges follow: Cys250/Cys274 and Cys265/Cys279. Substrate is bound at residue 256–257 (NR). His310 serves as a coordination point for Zn(2+). Substrate is bound by residues 311 to 312 (SY) and Tyr363. Glu385 acts as the Proton donor/acceptor in catalysis.

Belongs to the peptidase M14 family. Zn(2+) is required as a cofactor.

Its subcellular location is the secreted. It carries out the reaction Release of C-terminal Arg and Lys from a polypeptide.. With respect to regulation, TAFI/CPB2 is unique among carboxypeptidases in that it spontaneously inactivates with a short half-life, a property that is crucial for its role in controlling blood clot lysis. The zymogen is stabilized by interactions with the activation peptide. Release of the activation peptide increases a dynamic flap mobility and in time this leads to conformational changes that disrupt the catalytic site and expose a cryptic thrombin-cleavage site present at Arg-324. In terms of biological role, cleaves C-terminal arginine or lysine residues from biologically active peptides such as kinins or anaphylatoxins in the circulation thereby regulating their activities. Down-regulates fibrinolysis by removing C-terminal lysine residues from fibrin that has already been partially degraded by plasmin. In Bos taurus (Bovine), this protein is Carboxypeptidase B2 (CPB2).